Here is a 150-residue protein sequence, read N- to C-terminus: 3-dehydroquinate dehydratase (150 aa).

The active-site Proton acceptor is Tyr22. The substrate site is built by Asn73, His79, and Asp86. His99 serves as the catalytic Proton donor. Residues 100–101 (LS) and Arg110 contribute to the substrate site.

It belongs to the type-II 3-dehydroquinase family. In terms of assembly, homododecamer.

It carries out the reaction 3-dehydroquinate = 3-dehydroshikimate + H2O. The protein operates within metabolic intermediate biosynthesis; chorismate biosynthesis; chorismate from D-erythrose 4-phosphate and phosphoenolpyruvate: step 3/7. Its function is as follows. Catalyzes a trans-dehydration via an enolate intermediate. The chain is 3-dehydroquinate dehydratase from Dinoroseobacter shibae (strain DSM 16493 / NCIMB 14021 / DFL 12).